The chain runs to 518 residues: DNA-(apurinic or apyrimidinic site) endonuclease 2 (518 aa).

The Mg(2+) site is built by Asn8 and Glu48. Tyr156 is an active-site residue. Asp197, Asn199, Asp303, and His304 together coordinate Mg(2+). Residue Asp197 is the Proton donor/acceptor of the active site. The Proton acceptor role is filled by His304. Residues 355-405 (STLQHNNQTRVQTCQNKAQVRSTRPQPSQVGSSRGQKNLKSYFQPSPSCPQ) are compositionally biased toward polar residues. Residues 355–407 (STLQHNNQTRVQTCQNKAQVRSTRPQPSQVGSSRGQKNLKSYFQPSPSCPQAS) are disordered. Lys371 participates in a covalent cross-link: Glycyl lysine isopeptide (Lys-Gly) (interchain with G-Cter in ubiquitin). A required for the interaction and colocalization with PCNA in nuclear foci in presence of oxidative-induced DNA damaging agents region spans residues 390 to 397 (QKNLKSYF). Zn(2+)-binding residues include Cys469, His472, Cys495, and Cys509. The segment at 469–518 (CGGHREPCVMRTVKKPGPNLGRRFYMCARPRGPPTDPSSRCNFFLWSRPS) adopts a GRF-type zinc-finger fold.

It belongs to the DNA repair enzymes AP/ExoA family. Interacts with PCNA; this interaction is triggered by reactive oxygen species and increased by misincorporation of uracil in nuclear DNA. Requires Mg(2+) as cofactor. Mn(2+) serves as cofactor. Ubiquitinated by the CUL9-RBX1 complex. Ubiquitinated by MKRN3 at Lys-371 leading to proteasomal degradation. As to expression, highly expressed in brain and kidney. Weakly expressed in the fetal brain.

The protein resides in the nucleus. It localises to the cytoplasm. Its subcellular location is the mitochondrion. It catalyses the reaction Exonucleolytic cleavage in the 3'- to 5'-direction to yield nucleoside 5'-phosphates.. 3'-5' exonuclease activity is activated by sodium and manganese. 3'-5' exonuclease and 3'-phosphodiesterase activities are stimulated in presence of PCNA. Functions as a weak apurinic/apyrimidinic (AP) endodeoxyribonuclease in the DNA base excision repair (BER) pathway of DNA lesions induced by oxidative and alkylating agents. Initiates repair of AP sites in DNA by catalyzing hydrolytic incision of the phosphodiester backbone immediately adjacent to the damage, generating a single-strand break with 5'-deoxyribose phosphate and 3'-hydroxyl ends. Also displays double-stranded DNA 3'-5' exonuclease, 3'-phosphodiesterase activities. Shows robust 3'-5' exonuclease activity on 3'-recessed heteroduplex DNA and is able to remove mismatched nucleotides preferentially. Also exhibits 3'-5' exonuclease activity on a single nucleotide gap containing heteroduplex DNA and on blunt-ended substrates. Shows fairly strong 3'-phosphodiesterase activity involved in the removal of 3'-damaged termini formed in DNA by oxidative agents. In the nucleus functions in the PCNA-dependent BER pathway. Plays a role in reversing blocked 3' DNA ends, problematic lesions that preclude DNA synthesis. Required for somatic hypermutation (SHM) and DNA cleavage step of class switch recombination (CSR) of immunoglobulin genes. Required for proper cell cycle progression during proliferation of peripheral lymphocytes. The chain is DNA-(apurinic or apyrimidinic site) endonuclease 2 (APEX2) from Homo sapiens (Human).